Here is a 480-residue protein sequence, read N- to C-terminus: Glutamate--tRNA ligase (480 aa).

The 'HIGH' region signature appears at 8-18; that stretch reads PSPTGPLHIGG. A 'KMSKS' region motif is present at residues 249 to 253; that stretch reads KMSKR. Lysine 252 lines the ATP pocket.

This sequence belongs to the class-I aminoacyl-tRNA synthetase family. Glutamate--tRNA ligase type 1 subfamily. As to quaternary structure, monomer.

The protein localises to the cytoplasm. It carries out the reaction tRNA(Glu) + L-glutamate + ATP = L-glutamyl-tRNA(Glu) + AMP + diphosphate. Its function is as follows. Catalyzes the attachment of glutamate to tRNA(Glu) in a two-step reaction: glutamate is first activated by ATP to form Glu-AMP and then transferred to the acceptor end of tRNA(Glu). This Carboxydothermus hydrogenoformans (strain ATCC BAA-161 / DSM 6008 / Z-2901) protein is Glutamate--tRNA ligase.